The primary structure comprises 550 residues: Glucose-6-phosphate isomerase 3 (550 aa).

Glu357 functions as the Proton donor in the catalytic mechanism. Active-site residues include His388 and Lys514.

This sequence belongs to the GPI family.

The protein resides in the cytoplasm. The enzyme catalyses alpha-D-glucose 6-phosphate = beta-D-fructose 6-phosphate. Its pathway is carbohydrate biosynthesis; gluconeogenesis. The protein operates within carbohydrate degradation; glycolysis; D-glyceraldehyde 3-phosphate and glycerone phosphate from D-glucose: step 2/4. Its function is as follows. Catalyzes the reversible isomerization of glucose-6-phosphate to fructose-6-phosphate. This chain is Glucose-6-phosphate isomerase 3, found in Rhodococcus jostii (strain RHA1).